The following is a 160-amino-acid chain: Transcription elongation factor GreA (160 aa).

It belongs to the GreA/GreB family.

In terms of biological role, necessary for efficient RNA polymerase transcription elongation past template-encoded arresting sites. The arresting sites in DNA have the property of trapping a certain fraction of elongating RNA polymerases that pass through, resulting in locked ternary complexes. Cleavage of the nascent transcript by cleavage factors such as GreA or GreB allows the resumption of elongation from the new 3'terminus. GreA releases sequences of 2 to 3 nucleotides. The sequence is that of Transcription elongation factor GreA from Francisella philomiragia subsp. philomiragia (strain ATCC 25017 / CCUG 19701 / FSC 153 / O#319-036).